A 168-amino-acid polypeptide reads, in one-letter code: Small ribosomal subunit protein uS9 (168 aa).

Over residues 1–11 (MAQNEELTTEA) the composition is skewed to low complexity. The interval 1–36 (MAQNEELTTEAVEAEENPTSYTSESSAAEAAPKKER) is disordered.

This sequence belongs to the universal ribosomal protein uS9 family.

The protein is Small ribosomal subunit protein uS9 of Pseudarthrobacter chlorophenolicus (strain ATCC 700700 / DSM 12829 / CIP 107037 / JCM 12360 / KCTC 9906 / NCIMB 13794 / A6) (Arthrobacter chlorophenolicus).